The following is a 228-amino-acid chain: Aquaporin Z (228 aa).

The next 5 membrane-spanning stretches (helical) occupy residues 1–21 (MLNK…GGCG), 46–66 (TVLT…NPAV), 82–102 (IPYW…LYVI), 129–149 (MMAG…IILG), and 154–174 (LAPA…IHLV). An NPA 1 motif is present at residues 63 to 65 (NPA). Positions 184 to 186 (NPA) match the NPA 2 motif. Residues 205–225 (LFWVAPLVGAVIGAIIWKGLL) form a helical membrane-spanning segment.

It belongs to the MIP/aquaporin (TC 1.A.8) family. Homotetramer.

The protein localises to the cell inner membrane. The enzyme catalyses H2O(in) = H2O(out). Its function is as follows. Channel that permits osmotically driven movement of water in both directions. It is involved in the osmoregulation and in the maintenance of cell turgor during volume expansion in rapidly growing cells. It mediates rapid entry or exit of water in response to abrupt changes in osmolarity. The chain is Aquaporin Z from Brucella suis biovar 1 (strain 1330).